The chain runs to 189 residues: Large ribosomal subunit protein eL14 (189 aa).

Belongs to the eukaryotic ribosomal protein eL14 family.

Component of the large ribosomal subunit. The ribosome is a large ribonucleoprotein complex responsible for the synthesis of proteins in the cell. The sequence is that of Large ribosomal subunit protein eL14 from Trypanosoma brucei brucei.